The chain runs to 20 residues: Pregnancy-associated glycoprotein 57 (20 aa).

This sequence belongs to the peptidase A1 family. In terms of processing, glycosylated.

It localises to the secreted. This chain is Pregnancy-associated glycoprotein 57, found in Ovis aries (Sheep).